Consider the following 415-residue polypeptide: Dynein assembly factor with WD repeat domains 1 (415 aa).

8 WD repeats span residues 90–129 (AHILPLTNVALNKAGSCFITGSYDRTCKVWDTASGEELHT), 132–174 (GHKN…HTFR), 175–214 (GHTAEIVCLSFNPQSTVVATGSMDTTAKLWDIQNGEEVVT), 217–256 (GHLAEIISLSFDTSGDRIITGSFDHTVVVWDASTGRKVHT), 259–298 (GHCAEISSALFNWDCSLILTGSMDKTCMLWDATSGKYVAT), 301–340 (GHDDEILDSCFDYTGKLIATASADGTARVYNATTRKCVTK), 343–384 (GHEG…QVLE), and 386–415 (HTDEIFSCAFNYKGNIVITGSKDNSCRIWR).

It belongs to the WD repeat WDR69 family. In terms of assembly, interacts with IFT46. In early mouse embryos, expression is limited to distal, motile ciliated cells of the node.

The protein localises to the cytoplasm. It is found in the cytoskeleton. Its subcellular location is the flagellum basal body. It localises to the flagellum axoneme. Functionally, required for axonemal dynein assembly and ciliary motility in ciliated organs, including Kupffer's vesicle, during embryogenesis. Facilitates the onset of robust cilia motility during development. The protein is Dynein assembly factor with WD repeat domains 1 of Mus musculus (Mouse).